A 178-amino-acid polypeptide reads, in one-letter code: Cell division protein ZapC (178 aa).

Belongs to the ZapC family. In terms of assembly, interacts directly with FtsZ.

It localises to the cytoplasm. In terms of biological role, contributes to the efficiency of the cell division process by stabilizing the polymeric form of the cell division protein FtsZ. Acts by promoting interactions between FtsZ protofilaments and suppressing the GTPase activity of FtsZ. The chain is Cell division protein ZapC from Pseudoalteromonas atlantica (strain T6c / ATCC BAA-1087).